Consider the following 353-residue polypeptide: Holliday junction branch migration complex subunit RuvB (353 aa).

Residues 1–25 (MDPGPAGDEVSLAPQQETAEQDVET) are disordered. A large ATPase domain (RuvB-L) region spans residues 1–188 (MDPGPAGDEV…FGFTAHMEFY (188 aa)). Residues leucine 27, arginine 28, glycine 69, lysine 72, threonine 73, serine 74, 135-137 (EDY), arginine 178, tyrosine 188, and arginine 225 contribute to the ATP site. Residue threonine 73 participates in Mg(2+) binding. The small ATPAse domain (RuvB-S) stretch occupies residues 189–259 (EPAELELVVR…VARAALEVYD (71 aa)). The tract at residues 262 to 353 (EHGLDRLDRA…ATRSLFADEV (92 aa)) is head domain (RuvB-H). The DNA site is built by arginine 317 and arginine 322.

The protein belongs to the RuvB family. In terms of assembly, homohexamer. Forms an RuvA(8)-RuvB(12)-Holliday junction (HJ) complex. HJ DNA is sandwiched between 2 RuvA tetramers; dsDNA enters through RuvA and exits via RuvB. An RuvB hexamer assembles on each DNA strand where it exits the tetramer. Each RuvB hexamer is contacted by two RuvA subunits (via domain III) on 2 adjacent RuvB subunits; this complex drives branch migration. In the full resolvosome a probable DNA-RuvA(4)-RuvB(12)-RuvC(2) complex forms which resolves the HJ.

It is found in the cytoplasm. The catalysed reaction is ATP + H2O = ADP + phosphate + H(+). Functionally, the RuvA-RuvB-RuvC complex processes Holliday junction (HJ) DNA during genetic recombination and DNA repair, while the RuvA-RuvB complex plays an important role in the rescue of blocked DNA replication forks via replication fork reversal (RFR). RuvA specifically binds to HJ cruciform DNA, conferring on it an open structure. The RuvB hexamer acts as an ATP-dependent pump, pulling dsDNA into and through the RuvAB complex. RuvB forms 2 homohexamers on either side of HJ DNA bound by 1 or 2 RuvA tetramers; 4 subunits per hexamer contact DNA at a time. Coordinated motions by a converter formed by DNA-disengaged RuvB subunits stimulates ATP hydrolysis and nucleotide exchange. Immobilization of the converter enables RuvB to convert the ATP-contained energy into a lever motion, pulling 2 nucleotides of DNA out of the RuvA tetramer per ATP hydrolyzed, thus driving DNA branch migration. The RuvB motors rotate together with the DNA substrate, which together with the progressing nucleotide cycle form the mechanistic basis for DNA recombination by continuous HJ branch migration. Branch migration allows RuvC to scan DNA until it finds its consensus sequence, where it cleaves and resolves cruciform DNA. The protein is Holliday junction branch migration complex subunit RuvB of Saccharopolyspora erythraea (strain ATCC 11635 / DSM 40517 / JCM 4748 / NBRC 13426 / NCIMB 8594 / NRRL 2338).